Reading from the N-terminus, the 589-residue chain is Aspartate--tRNA ligase (589 aa).

Residue Glu-174 participates in L-aspartate binding. The aspartate stretch occupies residues 198–201; that stretch reads QLFK. Position 220 (Arg-220) interacts with L-aspartate. ATP-binding positions include 220–222 and Gln-229; that span reads RDE. An L-aspartate-binding site is contributed by His-448. Glu-483 contributes to the ATP binding site. Arg-490 provides a ligand contact to L-aspartate. 535–538 provides a ligand contact to ATP; that stretch reads GIDR.

This sequence belongs to the class-II aminoacyl-tRNA synthetase family. Type 1 subfamily. In terms of assembly, homodimer.

It is found in the cytoplasm. It carries out the reaction tRNA(Asp) + L-aspartate + ATP = L-aspartyl-tRNA(Asp) + AMP + diphosphate. In terms of biological role, catalyzes the attachment of L-aspartate to tRNA(Asp) in a two-step reaction: L-aspartate is first activated by ATP to form Asp-AMP and then transferred to the acceptor end of tRNA(Asp). This Xylella fastidiosa (strain M23) protein is Aspartate--tRNA ligase.